The primary structure comprises 115 residues: Cell division topological specificity factor (115 aa).

The disordered stretch occupies residues 89 to 115 (TGQIQLKEPKNQSEVDSPETEGKDQNS).

This sequence belongs to the MinE family.

Functionally, prevents the cell division inhibition by proteins MinC and MinD at internal division sites while permitting inhibition at polar sites. This ensures cell division at the proper site by restricting the formation of a division septum at the midpoint of the long axis of the cell. The chain is Cell division topological specificity factor from Prochlorococcus marinus (strain NATL2A).